We begin with the raw amino-acid sequence, 98 residues long: Acylphosphatase (98 aa).

Positions 12–98 (TYYVRVRGVV…ERRFDRFQQQ (87 aa)) constitute an Acylphosphatase-like domain. Residues Arg27 and Asn45 contribute to the active site.

This sequence belongs to the acylphosphatase family.

The catalysed reaction is an acyl phosphate + H2O = a carboxylate + phosphate + H(+). This is Acylphosphatase (acyP) from Burkholderia ambifaria (strain ATCC BAA-244 / DSM 16087 / CCUG 44356 / LMG 19182 / AMMD) (Burkholderia cepacia (strain AMMD)).